Consider the following 87-residue polypeptide: U3-theraphotoxin-Hhn1g (87 aa).

The signal sequence occupies residues 1–24 (MVNMKASMFLTFAGLVLLFVVCFA). A propeptide spanning residues 25 to 52 (SESEEKEFPKEMLSSIFAVDNDFKQEER) is cleaved from the precursor. Intrachain disulfides connect Cys-54/Cys-67, Cys-61/Cys-72, and Cys-66/Cys-79.

Belongs to the neurotoxin 10 (Hwtx-1) family. 51 (Hntx-8) subfamily. Hntx-8 sub-subfamily. As to expression, expressed by the venom gland.

Its subcellular location is the secreted. Ion channel inhibitor. The chain is U3-theraphotoxin-Hhn1g from Cyriopagopus hainanus (Chinese bird spider).